Reading from the N-terminus, the 446-residue chain is MNVKKFPEGFLWGVATASYQIEGSPLADGAGMSIWHTFSHTPGNVKNGDTGDVACDHYNRWKEDIEIIEKLGVKAYRFSISWPRILPEGTGRVNQKGLDFYNRIIDTLLEKGITPFVTIYHWDLPFALQLKGGWANREIADWFAEYSRVLFENFGDRVKNWITLNEPWVVAIVGHLYGVHAPGMRDIYVAFRAVHNLLRAHARAVKVFRETVKDGKIGIVFNNGYFEPASEKEEDIRAVRFMHQFNNYPLFLNPIYRGDYPELVLEFAREYLPENYKDDMSEIQEKIDFVGLNYYSGHLVKFDPDAPAKVSFVERDLPKTAMGWEIVPEGIYWILKKVKEEYNPPEVYITENGAAFDDVVSEDGRVHDQNRIDYLKAHIGQAWKAIQEGVPLKGYFVWSLLDNFEWAEGYSKRFGIVYVDYSTQKRIVKDSGYWYSNVVKNNGLED.

Glu166 acts as the Proton donor in catalysis. Glu351 (nucleophile) is an active-site residue.

This sequence belongs to the glycosyl hydrolase 1 family.

The enzyme catalyses Hydrolysis of terminal, non-reducing beta-D-glucosyl residues with release of beta-D-glucose.. It participates in glycan metabolism; cellulose degradation. The protein is Beta-glucosidase A (bglA) of Thermotoga maritima (strain ATCC 43589 / DSM 3109 / JCM 10099 / NBRC 100826 / MSB8).